Here is a 484-residue protein sequence, read N- to C-terminus: tRNA nucleotidyltransferase cca2 (484 aa).

The B/A element motif lies at 122–124 (RAE). The segment at 125-142 (SYDDKSRIPSVTPGTVET) is flexible loop. The short motif at 234 to 244 (ERVGEEIEKML) is the ERhxxExxxhh motif element.

The protein belongs to the tRNA nucleotidyltransferase/poly(A) polymerase family.

It is found in the cytoplasm. It catalyses the reaction a tRNA with a 3' CC end + ATP = a tRNA with a 3' CCA end + diphosphate. In terms of biological role, tRNA nucleotidyltransferase involved in the synthesis of the tRNA CCA terminus. In contrast to what is usually observed in eukaryotes for which one enzyme synthesizes the whole tRNA CCA terminus, in S.pombe, cca1 specifically adds two cytidine residues to a tRNA substrate lacking this sequence while cca2 specifically adds the terminal adenosine residue thereby completing the CCA sequence. The protein is tRNA nucleotidyltransferase cca2 of Schizosaccharomyces pombe (strain 972 / ATCC 24843) (Fission yeast).